The sequence spans 152 residues: Superoxide dismutase [Cu-Zn] (152 aa).

At S2 the chain carries N-acetylserine. Residues H44, H46, and H61 each contribute to the Cu cation site. C55 and C144 are disulfide-bonded. 4 residues coordinate Zn(2+): H61, H69, H78, and D81. H118 provides a ligand contact to Cu cation.

Belongs to the Cu-Zn superoxide dismutase family. Monomer. Requires Cu cation as cofactor. Zn(2+) serves as cofactor.

The protein resides in the cytoplasm. The catalysed reaction is 2 superoxide + 2 H(+) = H2O2 + O2. With respect to regulation, inhibited by KCN and diethyldithiocarbamate. Functionally, destroys radicals which are normally produced within the cells and which are toxic to biological systems. The plasma superoxide dismutase has phagocytosis-stimulating activity and may play an important role in the biological defenses of the organism. The polypeptide is Superoxide dismutase [Cu-Zn] (Halocynthia roretzi (Sea squirt)).